We begin with the raw amino-acid sequence, 352 residues long: Molybdenum import ATP-binding protein ModC (352 aa).

Residues 2–230 enclose the ABC transporter domain; the sequence is MLEINVKKRL…PLFEPWQEQG (229 aa). Residue 32–39 participates in ATP binding; the sequence is GISGSGKS. Positions 290–352 constitute a Mop domain; the sequence is KTSIRNILSG…YAQIKAVSVM (63 aa).

Belongs to the ABC transporter superfamily. Molybdate importer (TC 3.A.1.8) family. As to quaternary structure, the complex is composed of two ATP-binding proteins (ModC), two transmembrane proteins (ModB) and a solute-binding protein (ModA).

It localises to the cell inner membrane. It carries out the reaction molybdate(out) + ATP + H2O = molybdate(in) + ADP + phosphate + H(+). Functionally, part of the ABC transporter complex ModABC involved in molybdenum import. Responsible for energy coupling to the transport system. In Mannheimia succiniciproducens (strain KCTC 0769BP / MBEL55E), this protein is Molybdenum import ATP-binding protein ModC.